Reading from the N-terminus, the 233-residue chain is MQKPIIEFRNVSKKFGNKLPINNVSFTVKKNNITTLIGPNGAGKTTIVRLMLGLEKPTSGEIIIDPKLKIGYVPQKFGLTPDLPITVKNFLELLAPSNFNNNIKEINSFIDLEHIKDQEISKLSGGQFQKVVLACSIVNNPDLIILDEPLQSLDVTSQQEFYQLINLIRKKLNITVFMISHDLFTVIKNSDQVICLNGHICCSGIPNEITPNSEFSNALSALGFYTHHHDHKH.

The ABC transporter domain maps to 6-222 (IEFRNVSKKF…SEFSNALSAL (217 aa)). 38–45 (GPNGAGKT) lines the ATP pocket.

This sequence belongs to the ABC transporter superfamily. Zinc importer (TC 3.A.1.15.5) family. In terms of assembly, the complex is composed of two ATP-binding proteins (ZnuC), two transmembrane proteins (ZnuB) and a solute-binding protein (ZnuA).

It localises to the cell inner membrane. It carries out the reaction Zn(2+)(out) + ATP(in) + H2O(in) = Zn(2+)(in) + ADP(in) + phosphate(in) + H(+)(in). In terms of biological role, part of the ABC transporter complex ZnuABC involved in zinc import. Responsible for energy coupling to the transport system. The polypeptide is Zinc import ATP-binding protein ZnuC (Rickettsia conorii (strain ATCC VR-613 / Malish 7)).